The chain runs to 116 residues: Putative pterin-4-alpha-carbinolamine dehydratase 1 (116 aa).

This sequence belongs to the pterin-4-alpha-carbinolamine dehydratase family.

The enzyme catalyses (4aS,6R)-4a-hydroxy-L-erythro-5,6,7,8-tetrahydrobiopterin = (6R)-L-erythro-6,7-dihydrobiopterin + H2O. This is Putative pterin-4-alpha-carbinolamine dehydratase 1 from Gloeobacter violaceus (strain ATCC 29082 / PCC 7421).